The following is a 394-amino-acid chain: Ceramide synthase 4 (394 aa).

Residues Met1–Arg31 lie on the Lumenal side of the membrane. Residue Asn19 is glycosylated (N-linked (GlcNAc...) asparagine). Residues Val32–Met52 traverse the membrane as a helical segment. A homeobox-like region spans residues Trp67–Gln128. One can recognise a TLC domain in the interval Lys131 to Lys332. Helical transmembrane passes span Phe140–Leu160, Leu179–Phe199, Gln209–Leu229, and Val260–Phe280. A Last loop motif motif is present at residues Glu291–Gly301. A helical transmembrane segment spans residues Phe304–Leu324. The Cytoplasmic portion of the chain corresponds to Arg325–Thr394. Residues Arg341–Thr394 are disordered. Ser342, Ser349, and Ser350 each carry phosphoserine.

Phosphorylated at the C-terminus by CK2. In terms of processing, N-glycosylated.

The protein resides in the endoplasmic reticulum membrane. It carries out the reaction sphinganine + octadecanoyl-CoA = N-(octadecanoyl)-sphinganine + CoA + H(+). It catalyses the reaction eicosanoyl-CoA + sphinganine = N-eicosanoylsphinganine + CoA + H(+). The catalysed reaction is docosanoyl-CoA + sphinganine = N-docosanoylsphinganine + CoA + H(+). The enzyme catalyses tetracosanoyl-CoA + sphinganine = N-tetracosanoylsphinganine + CoA + H(+). It carries out the reaction hexacosanoyl-CoA + sphinganine = N-hexacosanoylsphinganine + CoA + H(+). It catalyses the reaction a fatty acyl-CoA + sphing-4-enine = an N-acylsphing-4-enine + CoA + H(+). The catalysed reaction is sphing-4-enine + octadecanoyl-CoA = N-octadecanoylsphing-4-enine + CoA + H(+). The enzyme catalyses hexadecasphinganine + octadecanoyl-CoA = N-octadecanoylhexadecasphinganine + CoA + H(+). Its pathway is lipid metabolism; sphingolipid metabolism. Its function is as follows. Ceramide synthase that catalyzes formation of ceramide from sphinganine and acyl-CoA substrates, with high selectivity toward long and very-long chains (C18:0-C22:0) as acyl donor. The protein is Ceramide synthase 4 of Homo sapiens (Human).